A 270-amino-acid chain; its full sequence is Protein MGF 110-1L (270 aa).

Residues 1–26 form the signal peptide; sequence MLGLQIITLLFIPTLLYAYELEPLER. An A repeat occupies 1–146; sequence MLGLQIITLL…YIRKRSLQTI (146 aa). Residue Asn75 is glycosylated (N-linked (GlcNAc...) asparagine; by host). 2 helical membrane-spanning segments follow: residues 118-138 and 146-166; these read WQKLLTYGFYLVGCVLVVNYI and IVYLLVLLVIFFLLSQLMLYR. A B repeat occupies 147-270; sequence VYLLVLLVIF…DNLMKKQDIM (124 aa).

The protein belongs to the asfivirus MGF 110 family.

The protein localises to the membrane. In terms of biological role, plays a role in virus cell tropism, and may be required for efficient virus replication in macrophages. The protein is Protein MGF 110-1L of Ornithodoros (relapsing fever ticks).